We begin with the raw amino-acid sequence, 87 residues long: uncharacterized protein (87 aa).

The next 2 helical transmembrane spans lie at 10 to 30 (VAFTVLAYFTFFAGVFLFSIG) and 43 to 63 (GYYIAVMILVAVGAILTQKVT).

The protein localises to the cell membrane. This is an uncharacterized protein from Bacillus subtilis (strain 168).